A 373-amino-acid polypeptide reads, in one-letter code: Glycerol-3-phosphate dehydrogenase [NAD(+)] 2 (373 aa).

Serine 15 is modified (phosphoserine). Residues 31–36 (GSGNWG), phenylalanine 123, lysine 146, and alanine 179 contribute to the NAD(+) site. Lysine 146 contributes to the substrate binding site. The Proton acceptor role is filled by lysine 236. 2 residues coordinate NAD(+): arginine 300 and glutamine 329. 300–301 (RN) lines the substrate pocket.

The protein belongs to the NAD-dependent glycerol-3-phosphate dehydrogenase family.

It localises to the cytoplasm. The enzyme catalyses sn-glycerol 3-phosphate + NAD(+) = dihydroxyacetone phosphate + NADH + H(+). This chain is Glycerol-3-phosphate dehydrogenase [NAD(+)] 2 (gpd2), found in Schizosaccharomyces pombe (strain 972 / ATCC 24843) (Fission yeast).